The primary structure comprises 164 residues: Ubiquitin-fold modifier-conjugating enzyme 1 (164 aa).

Cys-116 (glycyl thioester intermediate) is an active-site residue.

This sequence belongs to the ubiquitin-conjugating enzyme family. UFC1 subfamily.

E2-like enzyme which forms an intermediate with UFM1 via a thioester linkage. This is Ubiquitin-fold modifier-conjugating enzyme 1 from Drosophila willistoni (Fruit fly).